The primary structure comprises 361 residues: D-alanine--D-alanine ligase (361 aa).

Positions 134–344 (KLLLKSFDIP…FKDLVDNLID (211 aa)) constitute an ATP-grasp domain. 167 to 222 (KEVLGYPVIVKPAVLGSSIGINVAYSENQIESFIKEALKYDLTIVIEKFIEAREIE) contributes to the ATP binding site. Mg(2+)-binding residues include D297, E311, and N313.

It belongs to the D-alanine--D-alanine ligase family. It depends on Mg(2+) as a cofactor. Mn(2+) is required as a cofactor.

The protein localises to the cytoplasm. It catalyses the reaction 2 D-alanine + ATP = D-alanyl-D-alanine + ADP + phosphate + H(+). It functions in the pathway cell wall biogenesis; peptidoglycan biosynthesis. Cell wall formation. This chain is D-alanine--D-alanine ligase, found in Borreliella burgdorferi (strain ATCC 35210 / DSM 4680 / CIP 102532 / B31) (Borrelia burgdorferi).